The following is a 370-amino-acid chain: DNA replication and repair protein RecF (370 aa).

Residue 30–37 (GQNGMGKT) participates in ATP binding.

Belongs to the RecF family.

The protein resides in the cytoplasm. Functionally, the RecF protein is involved in DNA metabolism; it is required for DNA replication and normal SOS inducibility. RecF binds preferentially to single-stranded, linear DNA. It also seems to bind ATP. This chain is DNA replication and repair protein RecF, found in Bacteroides fragilis (strain YCH46).